The following is a 422-amino-acid chain: L-threonine dehydratase biosynthetic IlvA (422 aa).

K56 carries the post-translational modification N6-(pyridoxal phosphate)lysine. Pyridoxal 5'-phosphate contacts are provided by residues N83, 189–193, and S315; that span reads GGGGL. One can recognise an ACT-like domain in the interval 339 to 413; that stretch reads HYFILNFPQR…FDKSNIYINE (75 aa).

It belongs to the serine/threonine dehydratase family. In terms of assembly, homotetramer. Pyridoxal 5'-phosphate is required as a cofactor.

It carries out the reaction L-threonine = 2-oxobutanoate + NH4(+). The protein operates within amino-acid biosynthesis; L-isoleucine biosynthesis; 2-oxobutanoate from L-threonine: step 1/1. Catalyzes the anaerobic formation of alpha-ketobutyrate and ammonia from threonine in a two-step reaction. The first step involved a dehydration of threonine and a production of enamine intermediates (aminocrotonate), which tautomerizes to its imine form (iminobutyrate). Both intermediates are unstable and short-lived. The second step is the nonenzymatic hydrolysis of the enamine/imine intermediates to form 2-ketobutyrate and free ammonia. In the low water environment of the cell, the second step is accelerated by RidA. The sequence is that of L-threonine dehydratase biosynthetic IlvA (ilvA) from Staphylococcus saprophyticus subsp. saprophyticus (strain ATCC 15305 / DSM 20229 / NCIMB 8711 / NCTC 7292 / S-41).